The following is a 2792-amino-acid chain: E3 ubiquitin-protein ligase UBR5 (2792 aa).

Residue Thr2 is modified to N-acetylthreonine. A compositionally biased stretch (basic and acidic residues) spans 77–88 (DRLELGKPDNND). A disordered region spans residues 77-175 (DRLELGKPDN…DRGSGLLGSQ (99 aa)). Residues 94-111 (SSSGTGRTSRPGRTSDSP) show a composition bias toward low complexity. Residue Ser110 is modified to Phosphoserine. Over residues 135 to 144 (GVGGSGGGSS) the composition is skewed to gly residues. Residues 184 to 226 (VIPEELISQAQVVLQGKSRSVIIRELQRTNLDVNLAVNNLLSR) enclose the UBA domain. Residue Ser321 is modified to Phosphoserine. Positions 322–341 (FDNERGSTSKEGESNPDKKN) are enriched in basic and acidic residues. The segment at 322-347 (FDNERGSTSKEGESNPDKKNTPVQSP) is disordered. Phosphoserine is present on residues Ser346 and Ser572. Over residues 577–598 (KSMEKASKTLETKPESKQEPVK) the composition is skewed to basic and acidic residues. Positions 577 to 642 (KSMEKASKTL…APREEEKVNE (66 aa)) are disordered. Residue Ser606 is modified to Phosphoserine. Positions 608–622 (ASTCSDASSIASSAS) are enriched in low complexity. Thr631 carries the phosphothreonine modification. 3 positions are modified to phosphoserine: Ser802, Ser922, and Ser1012. Disordered stretches follow at residues 993 to 1029 (AGLG…SMDP) and 1046 to 1069 (TAAT…EPSV). Over residues 1011-1027 (VSPPIAPPSWVPDPPSM) the composition is skewed to pro residues. Over residues 1046–1067 (TAATGSGQGPSTSTIPGPSTEP) the composition is skewed to polar residues. Thr1109 and Thr1129 each carry phosphothreonine. The segment at 1171–1239 (DTCSFTWTGA…EKCKCKTLIA (69 aa)) adopts a UBR-type zinc-finger fold. 5 positions are modified to phosphoserine: Ser1221, Ser1302, Ser1349, Ser1369, and Ser1475. The interval 1293–1312 (REDRNRKTASPEDSDMPDHD) is disordered. Residues 1509 to 1734 (SVEPLPPRPS…PSSTSTPAAS (226 aa)) form a disordered region. The segment covering 1518 to 1531 (SSDQASSSSQSQSS) has biased composition (low complexity). Residues 1532–1547 (YIIRNPQQRRISQSQP) are compositionally biased toward polar residues. Ser1543 carries the post-translational modification Phosphoserine. 2 stretches are compositionally biased toward acidic residues: residues 1553 to 1568 (EEQD…EVEV) and 1599 to 1608 (HDEDGSDMEL). Polar residues predominate over residues 1623–1632 (NHSNQDNASG). 3 stretches are compositionally biased toward low complexity: residues 1635 to 1651 (SVVT…ASSV), 1662 to 1675 (SNDS…SSQS), and 1720 to 1734 (AAST…PAAS). Thr1730 bears the Phosphothreonine mark. Ser1735 carries the post-translational modification Phosphoserine. Tyr1740 is subject to Phosphotyrosine. Position 1774 is a phosphoserine (Ser1774). The interval 1853-1884 (LASAGDPGHPNHPLHASQNSARRERMTAREEA) is disordered. The segment covering 1873-1884 (ARRERMTAREEA) has biased composition (basic and acidic residues). Residue Thr1963 is modified to Phosphothreonine. A disordered region spans residues 1978 to 2015 (GIDNEDSEHENDDDTSQSATLNDKDDDSLPAETGQNHP). Residues 1979–1992 (IDNEDSEHENDDDT) are compositionally biased toward acidic residues. 3 positions are modified to phosphoserine: Ser1984, Ser2020, and Ser2022. Residue Thr2024 is modified to Phosphothreonine. Residue Ser2070 is modified to Phosphoserine. The disordered stretch occupies residues 2111–2137 (RQKKEGEEQSLLAEEADSSKPGPSAPD). Thr2207 bears the Phosphothreonine mark. Phosphoserine is present on residues Ser2235 and Ser2283. The disordered stretch occupies residues 2317 to 2387 (HTSLMQRLRN…SDDPDPLPAH (71 aa)). Basic and acidic residues-rich tracts occupy residues 2326 to 2342 (NRGE…EMRR) and 2350 to 2362 (SRRD…RRQL). The PABC domain occupies 2371–2448 (PASEGNPSDD…AMELIIAHGR (78 aa)). The 338-residue stretch at 2455–2792 (ILDLGLLDSS…AIKTKNFGFV (338 aa)) folds into the HECT domain. A phosphoserine mark is found at Ser2463, Ser2477, and Ser2479. Residues 2467–2494 (VQENRKRHGSSRSVVDMDLEDTDDGDDN) are disordered. The span at 2483–2493 (MDLEDTDDGDD) shows a compositional bias: acidic residues. Cys2761 functions as the Glycyl thioester intermediate in the catalytic mechanism.

It belongs to the UBR5 family. Homotetramer; composed of a dimer of dimers. Associates with CDK9 and TFIIS/TCEA1 and forms a transcription regulatory complex made of CDK9, RNAP II, UBR5 and TFIIS/TCEA1 that can stimulate target gene transcription (e.g. gamma fibrinogen/FGG) by recruiting their promoters. Associates with the E3 ligase complex containing DYRK2, EDD/UBR5, DDB1 and DCAF1 proteins (EDVP complex). Binds TOPBP1. Interacts with PIH1D1. Interacts with CIB1.

Its subcellular location is the nucleus. The protein localises to the cytoplasm. It carries out the reaction S-ubiquitinyl-[E2 ubiquitin-conjugating enzyme]-L-cysteine + [acceptor protein]-L-lysine = [E2 ubiquitin-conjugating enzyme]-L-cysteine + N(6)-ubiquitinyl-[acceptor protein]-L-lysine.. The protein operates within protein modification; protein ubiquitination. Its function is as follows. E3 ubiquitin-protein ligase involved in different protein quality control pathways in the cytoplasm and nucleus. Mainly acts as a ubiquitin chain elongator that extends pre-ubiquitinated substrates. Component of the N-end rule pathway: ubiquitinates proteins bearing specific N-terminal residues that are destabilizing according to the N-end rule, leading to their degradation. Recognizes type-1 N-degrons, containing positively charged amino acids (Arg, Lys and His). Together with UBR4, part of a cytoplasm protein quality control pathway that prevents protein aggregation by catalyzing assembly of heterotypic 'Lys-11'-/'Lys-48'-linked branched ubiquitin chains on aggregated proteins, leading to substrate recognition by the segregase p97/VCP and degradation by the proteasome: UBR5 is probably branching multiple 'Lys-48'-linked chains of substrates initially modified with mixed conjugates by UBR4. Together with ITCH, catalyzes 'Lys-48'-/'Lys-63'-branched ubiquitination of TXNIP, leading to its degradation: UBR5 mediates branching of 'Lys-48'-linked chains of substrates initially modified with 'Lys-63'-linked conjugates by ITCH. Catalytic component of a nuclear protein quality control pathway that mediates ubiquitination and degradation of unpaired transcription factors (i.e. transcription factors that are not assembled into functional multiprotein complexes): specifically recognizes and binds degrons that are not accessible when transcription regulators are associated with their coactivators. Ubiquitinates various unpaired transcription regulator (MYC, SUPT4H1, SUPT5H, CDC20 and MCRS1), as well as ligand-bound nuclear receptors (ESR1, NR1H3, NR3C1, PGR, RARA, RXRA AND VDR) that are not associated with their nuclear receptor coactivators (NCOAs). Involved in maturation and/or transcriptional regulation of mRNA by mediating polyubiquitination and activation of CDK9. Also acts as a regulator of DNA damage response by acting as a suppressor of RNF168, an E3 ubiquitin-protein ligase that promotes accumulation of 'Lys-63'-linked histone H2A and H2AX at DNA damage sites, thereby acting as a guard against excessive spreading of ubiquitinated chromatin at damaged chromosomes. Regulates DNA topoisomerase II binding protein (TopBP1) in the DNA damage response. Ubiquitinates acetylated PCK1. Acts as a positive regulator of the canonical Wnt signaling pathway by mediating (1) ubiquitination and stabilization of CTNNB1, and (2) 'Lys-48'-linked ubiquitination and degradation of TLE3. Promotes disassembly of the mitotic checkpoint complex (MCC) from the APC/C complex by catalyzing ubiquitination of BUB1B, BUB3 and CDC20. Plays an essential role in extraembryonic development. Required for the maintenance of skeletal tissue homeostasis by acting as an inhibitor of hedgehog (HH) signaling. The chain is E3 ubiquitin-protein ligase UBR5 from Mus musculus (Mouse).